A 962-amino-acid polypeptide reads, in one-letter code: Oncostatin-M-specific receptor subunit beta (962 aa).

The signal sequence occupies residues 1 to 28 (MAFSVVLHQVTFLLAVLSLRTSQSKVLG). At 29 to 738 (EPLQLTPEIH…VTTPDVRSHM (710 aa)) the chain is on the extracellular side. A glycan (N-linked (GlcNAc...) asparagine) is linked at Asn219. Fibronectin type-III domains lie at 237-332 (EPKN…VHPK), 333-426 (APHD…TPEA), 428-527 (PSEA…SGHE), 528-621 (EVHE…TQEL), and 623-734 (PSVN…TPDV). An intrachain disulfide couples Cys243 to Cys253. Asn324 carries an N-linked (GlcNAc...) asparagine glycan. The WSXWS motif motif lies at 413–417 (WSDWM). Asn492, Asn578, and Asn723 each carry an N-linked (GlcNAc...) asparagine glycan. Residues 739–759 (LLQIILPMTLGVFLSIIVCYW) traverse the membrane as a helical segment. The Cytoplasmic portion of the chain corresponds to 760–962 (KSQWVKEKCY…ASLKENNLTS (203 aa)). The Box 1 motif signature appears at 768–776 (CYPDIPNPY). Positions 818-840 (VGSGKLHTEDVPTKPPLVPTEKD) are disordered.

It belongs to the type I cytokine receptor family. Type 2 subfamily. In terms of assembly, heterodimer composed of OSMR and IL6ST (type II OSM receptor). Heterodimer with IL31RA to form the IL31 receptor. Widely expressed. Expressed at high levels in the liver, skin and spleen. In the liver it is expressed exclusively in the oval cells.

It localises to the membrane. Functionally, associates with IL31RA to form the IL31 receptor. Binds IL31 and activates STAT1, STAT3 and STAT5. Capable of transducing OSM-specific signaling events. The OSM/OSM-R system is pivotal in the differentiation of oval cells into hepatocytes, thereby promoting liver regeneration. The polypeptide is Oncostatin-M-specific receptor subunit beta (Osmr) (Rattus norvegicus (Rat)).